A 224-amino-acid polypeptide reads, in one-letter code: ATP synthase subunit a (224 aa).

6 helical membrane-spanning segments follow: residues 17–37 (FSLNWLSTFLGLLMIPSIYWL), 72–92 (IFISLFSLILFNNFMGLFPYI), 99–119 (LTLTLSLALPLWLCFMLYGWI), 125–145 (MFAHLVPQGTPAILMPFMVCI), 166–186 (IAGHLLLTLLGNTGPSMSYIL), and 187–207 (VTFLLMAQIALLVLESAVAMI).

Belongs to the ATPase A chain family. F-type ATPases have 2 components, CF(1) - the catalytic core - and CF(0) - the membrane proton channel. CF(1) has five subunits: alpha(3), beta(3), gamma(1), delta(1), epsilon(1). CF(0) has three main subunits: a, b and c.

The protein localises to the mitochondrion inner membrane. Functionally, mitochondrial membrane ATP synthase (F(1)F(0) ATP synthase or Complex V) produces ATP from ADP in the presence of a proton gradient across the membrane which is generated by electron transport complexes of the respiratory chain. F-type ATPases consist of two structural domains, F(1) - containing the extramembraneous catalytic core and F(0) - containing the membrane proton channel, linked together by a central stalk and a peripheral stalk. During catalysis, ATP synthesis in the catalytic domain of F(1) is coupled via a rotary mechanism of the central stalk subunits to proton translocation. Key component of the proton channel; it may play a direct role in the translocation of protons across the membrane. This chain is ATP synthase subunit a (mt:ATPase6), found in Drosophila melanogaster (Fruit fly).